We begin with the raw amino-acid sequence, 336 residues long: MYYPFVRKALFQLDPERAHEFTFQQLRRITGTPFEALVRQKVPVKPVSCMGLTFKNPLGLAAGLDKDGECIDALGAMGFGSIEIGTVTPRPQPGNDKPRLFRLVDAEGLINRMGFNNLGVDNLIENVKKAHYDGVLGINIGKNKDTPVEQGKDDYLICMDKIYPYAGYIAINISSPNTPGLRTLQYGEALDDLLIAIKNKQNDLQKIHQKYVPIAVKIAPDLSEEELIQVADSLVRHNIDGVIATNTTLDRSLVQGMKNCDQTGGLSGRPLQLKSTEIIRRLSQELNGRLPIIGVGGIDSVIAAREKIAAGATLVQIYSGFIFKGPPLIKEIVSNI.

Residues 62–66 (AGLDK) and T86 each bind FMN. K66 contacts substrate. 111-115 (NRMGF) is a binding site for substrate. The FMN site is built by N139 and N172. N172 provides a ligand contact to substrate. S175 functions as the Nucleophile in the catalytic mechanism. N177 lines the substrate pocket. FMN-binding residues include K217 and T245. 246 to 247 (NT) serves as a coordination point for substrate. FMN-binding positions include G268, G297, and 318 to 319 (YS).

Belongs to the dihydroorotate dehydrogenase family. Type 2 subfamily. In terms of assembly, monomer. FMN is required as a cofactor.

The protein resides in the cell membrane. The catalysed reaction is (S)-dihydroorotate + a quinone = orotate + a quinol. It functions in the pathway pyrimidine metabolism; UMP biosynthesis via de novo pathway; orotate from (S)-dihydroorotate (quinone route): step 1/1. In terms of biological role, catalyzes the conversion of dihydroorotate to orotate with quinone as electron acceptor. This is Dihydroorotate dehydrogenase (quinone) from Escherichia fergusonii (strain ATCC 35469 / DSM 13698 / CCUG 18766 / IAM 14443 / JCM 21226 / LMG 7866 / NBRC 102419 / NCTC 12128 / CDC 0568-73).